The primary structure comprises 161 residues: Arachidonate 5-lipoxygenase-activating protein (161 aa).

Topologically, residues 1–8 (MDQEAVGN) are lumenal. A helical transmembrane segment spans residues 9 to 30 (VVLLAIVTLISVVQNAFFAHKV). Topologically, residues 31 to 52 (ELESKAQSGRSFQRTGTLAFER) are cytoplasmic. Residues 53–77 (VYTANQNCVDAYPTFLVVLWTAGLL) form a helical membrane-spanning segment. The Lumenal portion of the chain corresponds to 78 to 80 (CSQ). A helical membrane pass occupies residues 81-102 (VPAAFAGLMYLFVRQKYFVGYL). The Cytoplasmic segment spans residues 103 to 107 (GERTQ). An intramembrane segment occupies 108-115 (STPGYIFG). A helical membrane pass occupies residues 116 to 128 (KRIILFLFLMSLA). Residues 129–161 (GILNHYLIFFFGSDFENYIRTITTTISPLLLIP) lie on the Lumenal side of the membrane.

It belongs to the MAPEG family. In terms of assembly, homotrimer. Interacts with LTC4S and ALOX5.

It is found in the nucleus membrane. The protein localises to the endoplasmic reticulum membrane. Required for leukotriene biosynthesis by ALOX5 (5-lipoxygenase). Anchors ALOX5 to the membrane. Binds arachidonic acid, and could play an essential role in the transfer of arachidonic acid to ALOX5. Binds to MK-886, a compound that blocks the biosynthesis of leukotrienes. This is Arachidonate 5-lipoxygenase-activating protein (Alox5ap) from Rattus norvegicus (Rat).